The primary structure comprises 566 residues: Oxygen-dependent choline dehydrogenase (566 aa).

7–36 (DYIICGAGSAGNVLATRLTEDPDVTVLLLE) is an FAD binding site. A disordered region spans residues 180–202 (NGYQQEGFGPMDRTVTPKGRRAS). The active-site Proton acceptor is the histidine 474.

The protein belongs to the GMC oxidoreductase family. It depends on FAD as a cofactor.

The enzyme catalyses choline + A = betaine aldehyde + AH2. It carries out the reaction betaine aldehyde + NAD(+) + H2O = glycine betaine + NADH + 2 H(+). Its pathway is amine and polyamine biosynthesis; betaine biosynthesis via choline pathway; betaine aldehyde from choline (cytochrome c reductase route): step 1/1. Its function is as follows. Involved in the biosynthesis of the osmoprotectant glycine betaine. Catalyzes the oxidation of choline to betaine aldehyde and betaine aldehyde to glycine betaine at the same rate. The polypeptide is Oxygen-dependent choline dehydrogenase (Burkholderia cenocepacia (strain HI2424)).